We begin with the raw amino-acid sequence, 1707 residues long: Mediator of DNA damage checkpoint protein 1 (1707 aa).

Positions 1–23 (MESTQVIDWDAEEEEETELSSGS) are disordered. Positions 1–150 (MESTQVIDWD…PRSLLTIEKT (150 aa)) are interaction with CHEK2. The tract at residues 2 to 222 (ESTQVIDWDA…SSPFGLGSDT (221 aa)) is interaction with the MRN complex. A Phosphothreonine modification is found at threonine 4. Residues 9-18 (WDAEEEEETE) show a composition bias toward acidic residues. Residues 54 to 105 (NVVGRSPDCSVALPFPSISKQHAVIEISAWNKAPILQDCGSLNGTQIVKPPR) enclose the FHA domain. Threonine 146 carries the phosphothreonine modification. The interval 166 to 328 (ADSEEEGDFP…EERIPVTPPV (163 aa)) is disordered. 2 positions are modified to phosphoserine: serine 168 and serine 176. Residues 183–192 (GQRNTASPSA) show a composition bias toward polar residues. Residues serine 198 and serine 220 each carry the phosphoserine modification. Position 222 is a phosphothreonine (threonine 222). Residues 252–263 (ANGTTAGIQAQP) show a composition bias toward polar residues. Positions 264–278 (TEHKLKDTKVKKEAG) are enriched in basic and acidic residues. Serine 298 carries the phosphoserine modification. Threonine 300 is modified (phosphothreonine). Position 313 is a phosphoserine (serine 313). Threonine 315 is modified (phosphothreonine). Serine 360 is modified (phosphoserine). Threonine 362 bears the Phosphothreonine mark. A compositionally biased stretch (basic and acidic residues) spans 369 to 378 (ALDVPLERNH). Positions 369–398 (ALDVPLERNHTPMVINSDTDEEEEEEEEVS) are disordered. Position 385 is a phosphoserine (serine 385). Residues 386-397 (DTDEEEEEEEEV) are compositionally biased toward acidic residues. Threonine 387 is subject to Phosphothreonine. 5 positions are modified to phosphoserine: serine 398, serine 415, serine 425, serine 438, and serine 442. Disordered stretches follow at residues 417-497 (DPGA…PGSH), 520-642 (PGPS…AKEC), 679-699 (LFPCTLPQEPGPSHLSLQTPG), and 718-746 (REQSETSELHEAHGSQPSLPREPPGHQHL). Positions 425-439 (SQPQVLVEQSQSASG) are enriched in polar residues. The residue at position 444 (threonine 444) is a Phosphothreonine. The residue at position 461 (serine 461) is a Phosphoserine. A Phosphothreonine modification is found at threonine 470. Phosphoserine is present on residues serine 492, serine 493, serine 591, serine 593, and serine 595. Residues 580–595 (VSEQESTLEVRSQSGS) show a composition bias toward polar residues. The segment covering 626 to 642 (GREREAHVGRTKSAKEC) has biased composition (basic and acidic residues). Residues 719–730 (EQSETSELHEAH) show a composition bias toward basic and acidic residues. Residues serine 735 and serine 750 each carry the phosphoserine modification. Lysine 769 carries the post-translational modification N6-acetyllysine. Composition is skewed to basic and acidic residues over residues 778–804 (ADRMTPEREPLEREIRGRTENSERDVI), 812–868 (TKDR…REWE), and 875–889 (TPDRGVTEEGSHDQK). Disordered stretches follow at residues 778–899 (ADRM…TLKP) and 914–1510 (IITG…QETA). Residues serine 885, serine 929, and serine 962 each carry the phosphoserine modification. Residues 968 to 986 (STQSLLTSQSQKQSTPQPL) are compositionally biased toward low complexity. Serine 991 is subject to Phosphoserine. Composition is skewed to polar residues over residues 1026-1056 (PNTTCPTNQPAASRPTSRPTRGRANRSSTRT), 1068-1086 (QPSTSTEQPVIPKLTSQVT), and 1101-1113 (EIQSPTSTEQSVT). Phosphothreonine is present on threonine 1056. A phosphoserine mark is found at serine 1104, serine 1126, and serine 1128. Phosphothreonine is present on residues threonine 1132, threonine 1173, and threonine 1234. 4 stretches are compositionally biased toward polar residues: residues 1225–1241 (PLTSAKQPVTPNLTSRA), 1265–1281 (PSTSTEQPDTREPSSQA), 1295–1308 (VPTTPELQPFTSKK), and 1317–1326 (LVTQGRTYKP). Phosphothreonine is present on residues threonine 1297 and threonine 1298. Position 1327 is a phosphoserine (serine 1327). A compositionally biased stretch (polar residues) spans 1343 to 1363 (PSTSTDHLVTPKVTDQSLTLQ). Position 1352 is a phosphothreonine (threonine 1352). Phosphoserine is present on serine 1359. Low complexity predominate over residues 1364–1376 (SSPLSASPVSSTP). Threonine 1375 carries the post-translational modification Phosphothreonine. Residues 1378-1393 (LKPPVPIAQPVTPEPI) are compositionally biased toward pro residues. Lysine 1418 participates in a covalent cross-link: Glycyl lysine isopeptide (Lys-Gly) (interchain with G-Cter in SUMO2). Low complexity predominate over residues 1421-1441 (SALSEPEPQSSASQSSGASEA). Phosphoserine is present on residues serine 1435, serine 1436, serine 1439, and serine 1443. Basic and acidic residues predominate over residues 1459 to 1473 (VIKEEPVETEVKEEP). Residue lysine 1461 forms a Glycyl lysine isopeptide (Lys-Gly) (interchain with G-Cter in SUMO1); alternate linkage. Lysine 1461 is covalently cross-linked (Glycyl lysine isopeptide (Lys-Gly) (interchain with G-Cter in SUMO2); alternate). The residue at position 1480 (threonine 1480) is a Phosphothreonine. Over residues 1481 to 1493 (PEKRKRDHAEEVT) the composition is skewed to basic and acidic residues. Lysine 1496 carries the N6-acetyllysine modification. 2 consecutive BRCT domains span residues 1510-1588 (APKV…DYLV) and 1609-1700 (RERR…FVLS).

In terms of assembly, homodimer. Interacts with H2AX, which requires phosphorylation of H2AX on 'Ser-139'. Interacts with the MRN complex, composed of MRE11, RAD50, and NBN. Interacts with CHEK2, which requires ATM-mediated phosphorylation of 'Thr-68' within the FHA domain of CHEK2. Interacts constitutively with the BRCA1-BARD1 complex, SMC1A and TP53BP1. Interacts with ATM and FANCD2, and these interactions are reduced upon DNA damage. Also interacts with the PRKDC complex, composed of XRCC6/KU70, XRCC5/KU80 and PRKDC/XRCC7. This interaction may be required for PRKDC autophosphorylation, which is essential for DNA double strand break (DSB) repair. When phosphorylated by ATM, interacts with RNF8 (via FHA domain). Interacts with CEP164. When phosphorylated, interacts with APTX (via FHA-like domain). Interacts (when phosphorylated) with TOPBP1; promoting TOPBP1 localization to DNA damage sites during mitosis. Interacts (when phosphorylated) with NBN; promoting NBN and MRN complex localization to DNA damage sites. In terms of processing, phosphorylated upon exposure to ionizing radiation (IR), ultraviolet radiation (UV), and hydroxyurea (HU). Phosphorylation in response to IR requires ATM, NBN, and possibly CHEK2. Also phosphorylated during the G2/M phase of the cell cycle and during activation of the mitotic spindle checkpoint. Phosphorylation at Thr-4 by ATM stabilizes and enhances homodimerization via the FHA domain. Phosphorylated at Ser-168 and Ser-198 by CK2 in response to DNA damage during mitosis, promoting interaction with TOPBP1. Phosphorylated by CK2 in response to DNA damage, promoting interaction with NBN and recruitment of the MRN complex to DNA damage sites. Sumoylation at Lys-1461 by PIAS4 following DNA damage promotes ubiquitin-mediated degradation. Post-translationally, ubiquitinated by RNF4, leading to proteasomal degradation; undergoes 'Lys-48'-linked polyubiquitination.

The protein resides in the nucleus. The protein localises to the chromosome. In terms of biological role, histone reader protein required for checkpoint-mediated cell cycle arrest in response to DNA damage within both the S phase and G2/M phases of the cell cycle. Specifically recognizes and binds histone H2AX phosphorylated at 'Ser-139', a marker of DNA damage, serving as a scaffold for the recruitment of DNA repair and signal transduction proteins to discrete foci of DNA damage sites. Also required for downstream events subsequent to the recruitment of these proteins. These include phosphorylation and activation of the ATM, CHEK1 and CHEK2 kinases, and stabilization of TP53/p53 and apoptosis. ATM and CHEK2 may also be activated independently by a parallel pathway mediated by TP53BP1. Required for chromosomal stability during mitosis by promoting recruitment of TOPBP1 to DNA double strand breaks (DSBs): TOPBP1 forms filamentous assemblies that bridge MDC1 and tether broken chromosomes during mitosis. Required for the repair of DSBs via homologous recombination by promoting recruitment of NBN component of the MRN complex to DSBs. In Mus musculus (Mouse), this protein is Mediator of DNA damage checkpoint protein 1 (Mdc1).